We begin with the raw amino-acid sequence, 300 residues long: Ribosomal RNA small subunit methyltransferase H (300 aa).

S-adenosyl-L-methionine is bound by residues Gly-36–His-38, Asp-55, Leu-89, Asp-103, and Gln-110.

It belongs to the methyltransferase superfamily. RsmH family.

Its subcellular location is the cytoplasm. The catalysed reaction is cytidine(1402) in 16S rRNA + S-adenosyl-L-methionine = N(4)-methylcytidine(1402) in 16S rRNA + S-adenosyl-L-homocysteine + H(+). Specifically methylates the N4 position of cytidine in position 1402 (C1402) of 16S rRNA. This Thermotoga neapolitana (strain ATCC 49049 / DSM 4359 / NBRC 107923 / NS-E) protein is Ribosomal RNA small subunit methyltransferase H.